The following is a 311-amino-acid chain: Chemotaxis protein CheV3 (311 aa).

Residues 13–164 (EIELVDFRIY…LESILDDLKL (152 aa)) enclose the CheW-like domain. A Response regulatory domain is found at 182 to 308 (EVLFLDDSKT…FTEEISKILD (127 aa)). Asp241 bears the 4-aspartylphosphate mark.

Functionally, plays a role in chemotaxis signal transduction system in order to colonize the host stomach. May act as a phosphate sink to control the flow of phosphate to CheAY. This chain is Chemotaxis protein CheV3, found in Helicobacter pylori (strain ATCC 700392 / 26695) (Campylobacter pylori).